The sequence spans 538 residues: Putative cysteine ligase BshC (538 aa).

Residues 460–484 (KINEQIELLERMLKRNVEKKHEVEL) adopt a coiled-coil conformation.

It belongs to the BshC family.

Its function is as follows. Involved in bacillithiol (BSH) biosynthesis. May catalyze the last step of the pathway, the addition of cysteine to glucosamine malate (GlcN-Mal) to generate BSH. The sequence is that of Putative cysteine ligase BshC from Bacillus thuringiensis subsp. konkukian (strain 97-27).